A 435-amino-acid chain; its full sequence is Evolutionarily conserved signaling intermediate in Toll pathway, mitochondrial (435 aa).

The N-terminal 48 residues, 1-48 (MSWVQVNLLVRSLSRGWGGLCRPALSGTPFAQVSLQALRGLHCSAATH), are a transit peptide targeting the mitochondrion. A Glycyl lysine isopeptide (Lys-Gly) (interchain with G-Cter in ubiquitin) cross-link involves residue lysine 372. A disordered region spans residues 401–435 (LTTSRLEGQSPPHSPPKGPEEDDETIQAEQQQGQS).

It belongs to the ECSIT family. In terms of assembly, interacts with MAP3K1, SMAD4 and TRAF6. Interacts with SMAD1 only after BMP4-treatment. Part of the mitochondrial complex I assembly/MCIA complex that comprises at least the core subunits TMEM126B, NDUFAF1, ECSIT and ACAD9 and complement subunits such as COA1 and TMEM186. Interacts with NDUFAF1. Interacts with ACAD9. Interacts with TRIM59. Interacts with TMEM70 and TMEM242. Interacts (when ubiquitinated) with NF-kappa-B subunits RELA and NFKB1. Interacts with RIGI, IFIT1 and MAVS; these interactions promote RLR-mediated type I IFN induction. Interacts with SQSTM1; this interaction inhibits TLR4 signaling via functional regulation of the TRAF6-ECSIT complex. Interacts with cereblon/CRBN; this interaction inhibits the ubiquitination of ECSIT. In terms of processing, ubiquitinated on Lys-372; leading to translocation in the nucleus together with RELA and NFKB1 and expression of NF-kappa-B-dependent genes. Detected in heart, brain, lung, liver, skeletal muscle, kidney and testis. Detected in embryonic mesoderm and epiblast, and in extraembryonic ectoderm.

It is found in the cytoplasm. The protein localises to the nucleus. Its subcellular location is the mitochondrion. Its function is as follows. Adapter protein that plays a role in different signaling pathways including TLRs and IL-1 pathways or innate antiviral induction signaling. Plays a role in the activation of NF-kappa-B by forming a signal complex with TRAF6 and TAK1/MAP3K7 to activate TAK1/MAP3K7 leading to activation of IKKs. Once ubiquitinated, interacts with the dissociated RELA and NFKB1 proteins and translocates to the nucleus where it induces NF-kappa-B-dependent gene expression. Plays a role in innate antiviral immune response by bridging the pattern recognition receptors RIGI and MDA5/IFIT1 to the MAVS complex at the mitochondrion. Promotes proteolytic activation of MAP3K1. Involved in the BMP signaling pathway. Required for normal embryonic development. Functionally, as part of the MCIA complex, involved in the assembly of the mitochondrial complex I. The chain is Evolutionarily conserved signaling intermediate in Toll pathway, mitochondrial from Mus musculus (Mouse).